A 209-amino-acid chain; its full sequence is MNLFQNAKFFTTVNHLKDLPDTPLEIAFVGRSNAGKSSAINTLTNHVRLAYVSKTPGRTQHINFFELQNGNFMVDLPGYGYAQVPEAVRAHWVNLLGDYLRHRKELIGLVLIMDARHPLKELDIRMLDFFHTTGRPVHILLSKADKLSKNEQIKTLSQVKKLLKPYSDRQNISVQLFSSLKKQGIDEANRTVGSWFDAADAAASSPEEN.

The region spanning Thr22–Ala198 is the EngB-type G domain. Residues Ser37 and Thr59 each coordinate Mg(2+).

It belongs to the TRAFAC class TrmE-Era-EngA-EngB-Septin-like GTPase superfamily. EngB GTPase family. Mg(2+) is required as a cofactor.

Necessary for normal cell division and for the maintenance of normal septation. This Neisseria gonorrhoeae protein is Probable GTP-binding protein EngB.